The primary structure comprises 214 residues: Adenylate kinase (214 aa).

An ATP-binding site is contributed by 10 to 15 (GAGKGT). The segment at 30–59 (STGDMLRAAIKAGTELGLKAKAVMDAGQLV) is NMP. AMP contacts are provided by residues Thr-31, Arg-36, 57–59 (QLV), 85–88 (GFPR), and Gln-92. Residues 122–159 (GRRVHSGSGRTYHVVFNPPKVEGKDDVTGEDLVIRADD) form an LID region. Residues Arg-123 and 132–133 (TY) each bind ATP. Arg-156 and Arg-167 together coordinate AMP. Gln-200 is an ATP binding site.

This sequence belongs to the adenylate kinase family. As to quaternary structure, monomer.

The protein localises to the cytoplasm. The enzyme catalyses AMP + ATP = 2 ADP. Its pathway is purine metabolism; AMP biosynthesis via salvage pathway; AMP from ADP: step 1/1. Catalyzes the reversible transfer of the terminal phosphate group between ATP and AMP. Plays an important role in cellular energy homeostasis and in adenine nucleotide metabolism. The polypeptide is Adenylate kinase (Aeromonas hydrophila subsp. hydrophila (strain ATCC 7966 / DSM 30187 / BCRC 13018 / CCUG 14551 / JCM 1027 / KCTC 2358 / NCIMB 9240 / NCTC 8049)).